Consider the following 1256-residue polypeptide: Putative protein DDB_G0292252 (1256 aa).

4 disordered regions span residues 1–53 (MSDD…NNNN), 145–243 (LLNG…SISR), 898–951 (EQQQ…PVET), and 1069–1136 (SHPT…ATIS). Positions 147–214 (NGNNSNNNSN…NGNNINTSNG (68 aa)) are enriched in low complexity. Over residues 222 to 243 (QTESTEQDFTSTSQNSTPSISR) the composition is skewed to polar residues. Composition is skewed to low complexity over residues 898–916 (EQQQ…SNNE) and 925–942 (TTAA…TTTT). The span at 1069-1079 (SHPTIQSTSSP) shows a compositional bias: polar residues. The span at 1080–1136 (STSSSNNNNSTTTATNNNGNNGNNNNGNGNNNNNNNNNNNNNNNNNNNNNNGPATIS) shows a compositional bias: low complexity.

This Dictyostelium discoideum (Social amoeba) protein is Putative protein DDB_G0292252.